The primary structure comprises 253 residues: Core protein VP8 (253 aa).

The propeptide occupies 1-31 (MNDLLLENLFGEKALCAQVTRDQLLEIIAAG).

This sequence belongs to the chordopoxvirinae VP8 family. In terms of processing, undergoes morphogenesis-associated proteolysis which cleaves the 28 kDa to a 25-kDa product. Proteolytic cleavage of major core proteins P4a (A10L), P4b (A3L), and VP8 (L4R), which occurs at a late stage of core formation, is required for production of infectious mature virions (MV).

Its subcellular location is the virion. Its function is as follows. Major core structural protein. The protein is Core protein VP8 of Vertebrata (FPV).